Reading from the N-terminus, the 242-residue chain is Protein odd-skipped-related 1 (242 aa).

3 consecutive C2H2-type zinc fingers follow at residues 128–150 (FICKYCARHFTKSYNLMIHERTH), 156–178 (FHCETCGKSFRRQDHLRDHKYIH), and 184–207 (HKCEICGKGFCQLRTLNVHRSCHH).

This sequence belongs to the Odd C2H2-type zinc-finger protein family.

The protein localises to the nucleus. In terms of biological role, may function as transcription regulator. Essential for larval development. Required for morphogenesis and function of the digestive tract. The sequence is that of Protein odd-skipped-related 1 from Caenorhabditis elegans.